A 60-amino-acid polypeptide reads, in one-letter code: Large ribosomal subunit protein uL30 (60 aa).

It belongs to the universal ribosomal protein uL30 family. In terms of assembly, part of the 50S ribosomal subunit.

In Azoarcus sp. (strain BH72), this protein is Large ribosomal subunit protein uL30.